Reading from the N-terminus, the 158-residue chain is Histone H2B.1 (158 aa).

Residues lysine 7 and lysine 25 each carry the N6-acetyllysine modification. Disordered stretches follow at residues 26–45 (AAAGKDGKAGIMTPKKPKKG) and 135–158 (VHNFESETSKKNSQGRKRGRGQQT). The span at 135-144 (VHNFESETSK) shows a compositional bias: basic and acidic residues. Positions 147-158 (SQGRKRGRGQQT) are enriched in basic residues.

This sequence belongs to the histone H2B family. The nucleosome is a histone octamer containing two molecules each of H2A, H2B, H3 and H4 assembled in one H3-H4 heterotetramer and two H2A-H2B heterodimers. The octamer wraps approximately 147 bp of DNA. In terms of processing, can be acetylated to form H2BK6ac and H2BK33ac. Expressed in the generative cell within the bicellular pollen. Not detected in other reproductive or vegetative tissues.

The protein resides in the nucleus. The protein localises to the chromosome. Its function is as follows. Core component of nucleosome. Nucleosomes wrap and compact DNA into chromatin, limiting DNA accessibility to the cellular machineries which require DNA as a template. Histones thereby play a central role in transcription regulation, DNA repair, DNA replication and chromosomal stability. DNA accessibility is regulated via a complex set of post-translational modifications of histones, also called histone code, and nucleosome remodeling. The chain is Histone H2B.1 from Lilium longiflorum (Trumpet lily).